The primary structure comprises 207 residues: Outer-membrane lipoprotein LolB (207 aa).

The N-terminal stretch at 1-21 (MPMRKRHFYRLLPLASLLLAA) is a signal peptide. The N-palmitoyl cysteine moiety is linked to residue Cys-22. Cys-22 is lipidated: S-diacylglycerol cysteine.

Belongs to the LolB family. In terms of assembly, monomer.

It is found in the cell outer membrane. Functionally, plays a critical role in the incorporation of lipoproteins in the outer membrane after they are released by the LolA protein. The sequence is that of Outer-membrane lipoprotein LolB from Yersinia pseudotuberculosis serotype O:3 (strain YPIII).